The primary structure comprises 375 residues: Queuine tRNA-ribosyltransferase (375 aa).

The Proton acceptor role is filled by aspartate 90. Substrate is bound by residues 90-94, aspartate 144, glutamine 193, and glycine 220; that span reads DSGGF. An RNA binding region spans residues 251-257; it reads GVGTPED. Catalysis depends on aspartate 270, which acts as the Nucleophile. An RNA binding; important for wobble base 34 recognition region spans residues 275–279; it reads TRNAR. Zn(2+)-binding residues include cysteine 308, cysteine 310, cysteine 313, and histidine 339.

Belongs to the queuine tRNA-ribosyltransferase family. Homodimer. Within each dimer, one monomer is responsible for RNA recognition and catalysis, while the other monomer binds to the replacement base PreQ1. Requires Zn(2+) as cofactor.

It catalyses the reaction 7-aminomethyl-7-carbaguanine + guanosine(34) in tRNA = 7-aminomethyl-7-carbaguanosine(34) in tRNA + guanine. Its pathway is tRNA modification; tRNA-queuosine biosynthesis. Its function is as follows. Catalyzes the base-exchange of a guanine (G) residue with the queuine precursor 7-aminomethyl-7-deazaguanine (PreQ1) at position 34 (anticodon wobble position) in tRNAs with GU(N) anticodons (tRNA-Asp, -Asn, -His and -Tyr). Catalysis occurs through a double-displacement mechanism. The nucleophile active site attacks the C1' of nucleotide 34 to detach the guanine base from the RNA, forming a covalent enzyme-RNA intermediate. The proton acceptor active site deprotonates the incoming PreQ1, allowing a nucleophilic attack on the C1' of the ribose to form the product. After dissociation, two additional enzymatic reactions on the tRNA convert PreQ1 to queuine (Q), resulting in the hypermodified nucleoside queuosine (7-(((4,5-cis-dihydroxy-2-cyclopenten-1-yl)amino)methyl)-7-deazaguanosine). In Janthinobacterium sp. (strain Marseille) (Minibacterium massiliensis), this protein is Queuine tRNA-ribosyltransferase.